Here is a 252-residue protein sequence, read N- to C-terminus: Protein lin-28 homolog B (252 aa).

Residues 1–30 (MAEGGAARGTREEQGKLPEQEEEEEEDPQV) form a disordered region. Residues 9–19 (GTREEQGKLPE) are compositionally biased toward basic and acidic residues. A CSD domain is found at 32–105 (LGSGHCKWFN…GFESLRVTGP (74 aa)). 2 CCHC-type zinc fingers span residues 130–147 (DRCY…ECNL) and 152–169 (KKCH…NCPH). Zn(2+) is bound by residues Cys-132, Cys-135, His-140, Cys-145, Cys-154, Cys-157, His-162, and Cys-167. The segment at 172-252 (VPQHPTTSQG…KGPSVQKKKK (81 aa)) is disordered. Residues 213–222 (GRSELSERSS) show a composition bias toward basic and acidic residues. Positions 225-238 (PQEASLSKISTSPE) are enriched in polar residues.

Belongs to the lin-28 family.

The protein resides in the nucleus. The protein localises to the nucleolus. Functionally, suppressor of specific microRNA (miRNA) biogenesis. Binds target primary miRNA transcripts and sequester them in the nucleolus, away from the microprocessor complex, hence preventing their processing into mature miRNA. The specific interaction with target pri-miRNAs occurs via an 5'-GGAG-3' motif in the pre-miRNA terminal loop. This Xenopus laevis (African clawed frog) protein is Protein lin-28 homolog B (lin28b).